The following is a 64-amino-acid chain: Alpha-like toxin Lqh6 (64 aa).

The 62-residue stretch at 2 to 63 (RDGYIAQPEN…GIIVDGVKCH (62 aa)) folds into the LCN-type CS-alpha/beta domain. Disulfide bonds link cysteine 12/cysteine 62, cysteine 16/cysteine 34, cysteine 20/cysteine 44, and cysteine 24/cysteine 46. Lysine amide is present on lysine 64.

It belongs to the long (4 C-C) scorpion toxin superfamily. Sodium channel inhibitor family. Alpha subfamily. In terms of tissue distribution, expressed by the venom gland.

Its subcellular location is the secreted. Functionally, alpha toxins bind voltage-independently at site-3 of sodium channels (Nav) and inhibit the inactivation of the activated channels, thereby blocking neuronal transmission. This toxin is highly toxic to insects and mice, and inhibits the binding of alpha-toxin to cockroach neuronal membranes. This chain is Alpha-like toxin Lqh6, found in Leiurus hebraeus (Hebrew deathstalker scorpion).